Here is a 333-residue protein sequence, read N- to C-terminus: Foldase protein PrsA (333 aa).

The N-terminal stretch at 1-22 is a signal peptide; the sequence is MKKSTKLLAGIVTLASAMTLAA. C23 carries the N-palmitoyl cysteine lipid modification. C23 carries S-diacylglycerol cysteine lipidation. The region spanning 145–240 is the PpiC domain; sequence TPEMTTQVIT…NKFYIVKVTK (96 aa). The segment at 301-333 is disordered; it reads DKKASKANTSKSDQKTSSDSSKDSQSSKSKSEK. A compositionally biased stretch (basic and acidic residues) spans 312–322; that stretch reads SDQKTSSDSSK. The span at 323–333 shows a compositional bias: low complexity; the sequence is DSQSSKSKSEK.

It belongs to the PrsA family.

The protein resides in the cell membrane. The enzyme catalyses [protein]-peptidylproline (omega=180) = [protein]-peptidylproline (omega=0). In terms of biological role, plays a major role in protein secretion by helping the post-translocational extracellular folding of several secreted proteins. This chain is Foldase protein PrsA, found in Streptococcus equi subsp. zooepidemicus (strain H70).